A 558-amino-acid chain; its full sequence is CTP synthase (558 aa).

The amidoligase domain stretch occupies residues 1 to 267 (MAKFVFVTGG…CLEMLDVLNL (267 aa)). CTP is bound at residue S13. S13 provides a ligand contact to UTP. ATP contacts are provided by residues 14 to 19 (SIGKGI) and D71. The Mg(2+) site is built by D71 and E141. CTP is bound by residues 148–150 (DIE), 188–193 (KTKPTQ), and K224. UTP-binding positions include 188 to 193 (KTKPTQ) and K224. The region spanning 292–534 (KVALVGKYVQ…IEAAQLRLPA (243 aa)) is the Glutamine amidotransferase type-1 domain. G354 contributes to the L-glutamine binding site. C381 acts as the Nucleophile; for glutamine hydrolysis in catalysis. L-glutamine-binding positions include 382–385 (LGMQ), E405, and R462. Catalysis depends on residues H507 and E509. Residues 536–558 (PDEALRRQSQTNISAQEKPSRIG) are disordered. Over residues 542–552 (RQSQTNISAQE) the composition is skewed to polar residues.

This sequence belongs to the CTP synthase family. Homotetramer.

The catalysed reaction is UTP + L-glutamine + ATP + H2O = CTP + L-glutamate + ADP + phosphate + 2 H(+). It catalyses the reaction L-glutamine + H2O = L-glutamate + NH4(+). It carries out the reaction UTP + NH4(+) + ATP = CTP + ADP + phosphate + 2 H(+). The protein operates within pyrimidine metabolism; CTP biosynthesis via de novo pathway; CTP from UDP: step 2/2. Its activity is regulated as follows. Allosterically activated by GTP, when glutamine is the substrate; GTP has no effect on the reaction when ammonia is the substrate. The allosteric effector GTP functions by stabilizing the protein conformation that binds the tetrahedral intermediate(s) formed during glutamine hydrolysis. Inhibited by the product CTP, via allosteric rather than competitive inhibition. Its function is as follows. Catalyzes the ATP-dependent amination of UTP to CTP with either L-glutamine or ammonia as the source of nitrogen. Regulates intracellular CTP levels through interactions with the four ribonucleotide triphosphates. This chain is CTP synthase, found in Prochlorococcus marinus (strain MIT 9303).